Reading from the N-terminus, the 1059-residue chain is Nonsense-mediated mRNA decay factor SMG7 (1059 aa).

TPR repeat units lie at residues 149–183 (DQQS…LGDL) and 184–217 (ARYK…WPAS). Polar residues predominate over residues 806–817 (SHVSPAHSQSTS). Disordered stretches follow at residues 806-826 (SHVS…KWSP), 927-955 (HLGP…SGNN), 987-1015 (SGKP…QVPT), and 1040-1059 (STQL…RHFV).

As to quaternary structure, interacts with EXA1. Expressed in flowers and at lower levels in stems and leaves.

The protein localises to the cytoplasm. It localises to the P-body. Functionally, plays multiple roles in growth and development. Involved in nonsense-mediated mRNA decay (NMD). May provide a link to the mRNA degradation machinery to initiate NMD and serve as an adapter for UPF proteins function. Required for meiotic progression through anaphase II of pollen mother cells. May counteract cyclin-dependent kinase (CDK) activity at the end of meiosis. May play a role in plant defense through its involvement in NMD. Together with EXA1, helps to restrict cell death induction during pathogen infection in a salicylic acid- (SA) and reactive oxygen species- (ROS) independent manner. The sequence is that of Nonsense-mediated mRNA decay factor SMG7 from Arabidopsis thaliana (Mouse-ear cress).